Here is an 84-residue protein sequence, read N- to C-terminus: Molybdopterin synthase sulfur carrier subunit (84 aa).

Position 84 is a 1-thioglycine; alternate (glycine 84). Glycine 84 carries the glycyl adenylate; alternate modification.

Belongs to the MoaD family. MOCS2A subfamily. As to quaternary structure, heterotetramer; composed of 2 small (MOCS2A) and 2 large (MOCS2B) subunits. C-terminal thiocarboxylation occurs in 2 steps, it is first acyl-adenylated (-COAMP) via the hesA/moeB/thiF part of MOCS3, then thiocarboxylated (-COSH) via the rhodanese domain of MOCS3.

Its subcellular location is the cytoplasm. The protein operates within cofactor biosynthesis; molybdopterin biosynthesis. In terms of biological role, acts as a sulfur carrier required for molybdopterin biosynthesis. Component of the molybdopterin synthase complex that catalyzes the conversion of precursor Z into molybdopterin by mediating the incorporation of 2 sulfur atoms into precursor Z to generate a dithiolene group. In the complex, serves as sulfur donor by being thiocarboxylated (-COSH) at its C-terminus by MOCS3. After interaction with MOCS2B, the sulfur is then transferred to precursor Z to form molybdopterin. The chain is Molybdopterin synthase sulfur carrier subunit from Caenorhabditis briggsae.